Here is a 265-residue protein sequence, read N- to C-terminus: Exosome complex component RRP42 (265 aa).

Belongs to the RNase PH family. Component of the RNA exosome complex. Specifically part of the catalytically inactive RNA exosome core complex (Exo-9) which may associate with the catalytic subunits RRP6 and DIS3 in cytoplasmic- and nuclear-specific RNA exosome complex forms. Exo-9 is formed by a hexameric base ring of RNase PH domain-containing subunits and a cap ring consisting of CSL4, RRP4 and RRP40.

The protein localises to the cytoplasm. The protein resides in the nucleus. It is found in the nucleolus. Its function is as follows. Non-catalytic component of the RNA exosome complex which has 3'-&gt;5' exoribonuclease activity and participates in a multitude of cellular RNA processing and degradation events. In the nucleus, the RNA exosome complex is involved in proper maturation of stable RNA species such as rRNA, snRNA and snoRNA, in the elimination of RNA processing by-products and non-coding 'pervasive' transcripts, such as antisense RNA species and cryptic unstable transcripts (CUTs), and of mRNAs with processing defects, thereby limiting or excluding their export to the cytoplasm. In the cytoplasm, the RNA exosome complex is involved in general mRNA turnover and in RNA surveillance pathways, preventing translation of aberrant mRNAs. The catalytic inactive RNA exosome core complex of 9 subunits (Exo-9) is proposed to play a pivotal role in the binding and presentation of RNA for ribonucleolysis, and to serve as a scaffold for the association with catalytic subunits and accessory proteins or complexes. RRP42 is part of the hexameric ring of RNase PH domain-containing subunits proposed to form a central channel which threads RNA substrates for degradation. The protein is Exosome complex component RRP42 (RRP42) of Saccharomyces cerevisiae (strain ATCC 204508 / S288c) (Baker's yeast).